The chain runs to 431 residues: Hemagglutinin-esterase (431 aa).

An N-terminal signal peptide occupies residues 1-21; the sequence is MARTDAMAPRTLLLVLSLGYA. The interval 11–131 is esterase domain 1; that stretch reads TLLLVLSLGY…DNNRWMGNKA (121 aa). Topologically, residues 22 to 399 are virion surface; sequence FGFNEPLNVV…PVCMYDPLPV (378 aa). Serine 44 (nucleophile) is an active-site residue. Cysteine 48 and cysteine 69 are oxidised to a cystine. 8 N-linked (GlcNAc...) asparagine; by host glycosylation sites follow: asparagine 53, asparagine 93, asparagine 151, asparagine 157, asparagine 199, asparagine 244, asparagine 248, and asparagine 309. An intrachain disulfide couples cysteine 117 to cysteine 166. The receptor binding stretch occupies residues 132–274; it reads RFYTQLYQKM…GNYISISNEL (143 aa). Cystine bridges form between cysteine 205–cysteine 284 and cysteine 213–cysteine 257. An esterase domain 2 region spans residues 275–387; sequence LLTVPSKAIC…HCPTAANIVF (113 aa). A disulfide bridge connects residues cysteine 315 and cysteine 320. Asparagine 324 carries an N-linked (GlcNAc...) asparagine; by host glycan. Residues aspartate 334 and histidine 337 each act as charge relay system in the active site. N-linked (GlcNAc...) asparagine; by host glycans are attached at residues asparagine 352 and asparagine 366. Cysteines 355 and 379 form a disulfide. A helical membrane pass occupies residues 400-420; that stretch reads ILLGVLLGIAVLIIVFLMFYF. Over 421 to 431 the chain is Intravirion; sequence MTDSGVRLHEA.

It belongs to the influenza type C/coronaviruses hemagglutinin-esterase family. In terms of assembly, homodimer; disulfide-linked. Forms a complex with the M protein in the pre-Golgi. Associates then with S-M complex to form a ternary complex S-M-HE. Post-translationally, N-glycosylated in the host RER.

The protein resides in the virion membrane. It is found in the host cell membrane. It carries out the reaction N-acetyl-9-O-acetylneuraminate + H2O = N-acetylneuraminate + acetate + H(+). The catalysed reaction is N-acetyl-4-O-acetylneuraminate + H2O = N-acetylneuraminate + acetate + H(+). Functionally, structural protein that makes short spikes at the surface of the virus. Contains receptor binding and receptor-destroying activities. Mediates de-O-acetylation of N-acetyl-4-O-acetylneuraminic acid, which is probably the receptor determinant recognized by the virus on the surface of erythrocytes and susceptible cells. This receptor-destroying activity is important for virus release as it probably helps preventing self-aggregation and ensures the efficient spread of the progeny virus from cell to cell. May serve as a secondary viral attachment protein for initiating infection, the spike protein being the major one. May become a target for both the humoral and the cellular branches of the immune system. This Murine coronavirus (strain DVIM) (MHV-DVIM) protein is Hemagglutinin-esterase.